The chain runs to 78 residues: Acyl carrier protein (78 aa).

A Carrier domain is found at 4-78 (AEIKDKVYDI…QQAIDYIVKK (75 aa)). Serine 39 bears the O-(pantetheine 4'-phosphoryl)serine mark.

This sequence belongs to the acyl carrier protein (ACP) family. 4'-phosphopantetheine is transferred from CoA to a specific serine of apo-ACP by AcpS. This modification is essential for activity because fatty acids are bound in thioester linkage to the sulfhydryl of the prosthetic group.

It localises to the cytoplasm. Its pathway is lipid metabolism; fatty acid biosynthesis. Carrier of the growing fatty acid chain in fatty acid biosynthesis. This is Acyl carrier protein from Chlorobium limicola (strain DSM 245 / NBRC 103803 / 6330).